We begin with the raw amino-acid sequence, 464 residues long: Cerebellar degeneration-related protein 2-like (464 aa).

Coiled-coil stretches lie at residues 31–154, 201–264, and 342–379; these read AAEL…RRKT, VSSL…KSRV, and MSILREVDEQYHALLEKYEELLGKCRRHEESLRHAEVQ. Residues 371–419 are disordered; sequence ESLRHAEVQTSRPVSRDPSMKECRVAEPQQPPPTPPQTPSTPEALEGIS. Residues 384–395 show a composition bias toward basic and acidic residues; that stretch reads VSRDPSMKECRV. Over residues 399–409 the composition is skewed to pro residues; it reads QQPPPTPPQTP.

The protein belongs to the CDR2 family.

This is Cerebellar degeneration-related protein 2-like (cdr2l) from Danio rerio (Zebrafish).